We begin with the raw amino-acid sequence, 643 residues long: Asparagine synthetase domain-containing protein 1 (643 aa).

The active-site For GATase activity is the C2. In terms of domain architecture, Glutamine amidotransferase type-2 spans 2 to 184 (CGICCSVNFS…ASGLFRIDLK (183 aa)). The Asparagine synthetase domain occupies 285–601 (QFIDVLSVAV…GLTASALLPK (317 aa)).

This Homo sapiens (Human) protein is Asparagine synthetase domain-containing protein 1 (ASNSD1).